The following is a 310-amino-acid chain: Beta-ketoacyl-[acyl-carrier-protein] synthase III 1 (310 aa).

Residues C112 and H235 contribute to the active site. The ACP-binding stretch occupies residues 236–240; sequence QANIR. The active site involves N265.

It belongs to the thiolase-like superfamily. FabH family. In terms of assembly, homodimer.

It is found in the cytoplasm. It catalyses the reaction malonyl-[ACP] + acetyl-CoA + H(+) = 3-oxobutanoyl-[ACP] + CO2 + CoA. It participates in lipid metabolism; fatty acid biosynthesis. Functionally, catalyzes the condensation reaction of fatty acid synthesis by the addition to an acyl acceptor of two carbons from malonyl-ACP. Catalyzes the first condensation reaction which initiates fatty acid synthesis and may therefore play a role in governing the total rate of fatty acid production. Possesses both acetoacetyl-ACP synthase and acetyl transacylase activities. Its substrate specificity determines the biosynthesis of branched-chain and/or straight-chain of fatty acids. This is Beta-ketoacyl-[acyl-carrier-protein] synthase III 1 from Bacillus cereus (strain ATCC 14579 / DSM 31 / CCUG 7414 / JCM 2152 / NBRC 15305 / NCIMB 9373 / NCTC 2599 / NRRL B-3711).